Reading from the N-terminus, the 97-residue chain is Serine protease inhibitor Kazal-type 13 (97 aa).

The N-terminal stretch at 1 to 26 (MTRRGCWPHRIIFSLILLTWTHVTLA) is a signal peptide. The Kazal-like domain maps to 36-97 (NWPKPPCKMY…IEFVKYGKCE (62 aa)). 3 cysteine pairs are disulfide-bonded: Cys-42-Cys-78, Cys-56-Cys-75, and Cys-64-Cys-96.

As to expression, restricted to the epididymis, with highest levels in the initial segment, including epithelial cells, lumen, and sperm (at protein level). Localizes to the sperm heads, where it is restricted to the acrosomal region in epididymal spermatozoa, but not in testicular spermatozoa (at protein level).

Its subcellular location is the secreted. Functionally, may be a serine protease inhibitor. Essential for sperm maturation and fertility. Inhibits sperm acrosome reaction, protecting sperm from premature reaction. The chain is Serine protease inhibitor Kazal-type 13 (Spink13) from Rattus norvegicus (Rat).